The primary structure comprises 193 residues: Acyl carrier protein phosphodiesterase (193 aa).

Belongs to the AcpH family.

It carries out the reaction holo-[ACP] + H2O = apo-[ACP] + (R)-4'-phosphopantetheine + H(+). Converts holo-ACP to apo-ACP by hydrolytic cleavage of the phosphopantetheine prosthetic group from ACP. This chain is Acyl carrier protein phosphodiesterase, found in Yersinia pestis.